A 349-amino-acid polypeptide reads, in one-letter code: Thioredoxin-related transmembrane protein 4 (349 aa).

The N-terminal stretch at 1 to 23 is a signal peptide; it reads MAGGRCGPQLTALLAAWIAAVAA. A Thioredoxin domain is found at 30-137; it reads AALPPEQSRV…FEDLQNYILE (108 aa). Catalysis depends on nucleophile residues Cys-64 and Cys-67. A disulfide bond links Cys-64 and Cys-67. The helical transmembrane segment at 190 to 210 threads the bilayer; it reads VFFVIATLVFGLFMGLVLVVI. Positions 225–240 are enriched in basic and acidic residues; that stretch reads RSEQNRRSEEAHRAEQ. Residues 225–349 form a disordered region; that stretch reads RSEQNRRSEE…RKSQHADKGL (125 aa). Acidic residues-rich tracts occupy residues 242–284 and 312–321; these read QDAE…EEDN and VEPEEAEEGI. Ser-251 and Ser-259 each carry phosphoserine. The span at 335-349 shows a compositional bias: basic and acidic residues; it reads DSLRQRKSQHADKGL.

It localises to the nucleus inner membrane. The protein resides in the endoplasmic reticulum membrane. The polypeptide is Thioredoxin-related transmembrane protein 4 (TMX4) (Homo sapiens (Human)).